The following is a 212-amino-acid chain: Deoxyribose-phosphate aldolase (212 aa).

Aspartate 89 functions as the Proton donor/acceptor in the catalytic mechanism. Lysine 151 (schiff-base intermediate with acetaldehyde) is an active-site residue. The active-site Proton donor/acceptor is lysine 180.

Belongs to the DeoC/FbaB aldolase family. DeoC type 1 subfamily.

It is found in the cytoplasm. The enzyme catalyses 2-deoxy-D-ribose 5-phosphate = D-glyceraldehyde 3-phosphate + acetaldehyde. Its pathway is carbohydrate degradation; 2-deoxy-D-ribose 1-phosphate degradation; D-glyceraldehyde 3-phosphate and acetaldehyde from 2-deoxy-alpha-D-ribose 1-phosphate: step 2/2. Functionally, catalyzes a reversible aldol reaction between acetaldehyde and D-glyceraldehyde 3-phosphate to generate 2-deoxy-D-ribose 5-phosphate. The sequence is that of Deoxyribose-phosphate aldolase from Clostridium botulinum (strain Kyoto / Type A2).